The chain runs to 404 residues: Argininosuccinate synthase (404 aa).

ATP-binding positions include 10 to 18 (AYSGGLDTS) and Ala-37. The L-citrulline site is built by Tyr-90 and Ser-95. Residue Gly-120 coordinates ATP. L-aspartate contacts are provided by Thr-122, Asn-126, and Asp-127. Asn-126 lines the L-citrulline pocket. Arg-130, Ser-180, Ser-189, Glu-265, and Tyr-277 together coordinate L-citrulline.

Belongs to the argininosuccinate synthase family. Type 1 subfamily. In terms of assembly, homotetramer.

The protein resides in the cytoplasm. It catalyses the reaction L-citrulline + L-aspartate + ATP = 2-(N(omega)-L-arginino)succinate + AMP + diphosphate + H(+). Its pathway is amino-acid biosynthesis; L-arginine biosynthesis; L-arginine from L-ornithine and carbamoyl phosphate: step 2/3. The polypeptide is Argininosuccinate synthase (Helicobacter hepaticus (strain ATCC 51449 / 3B1)).